The chain runs to 444 residues: Glutamyl-tRNA(Gln) amidotransferase subunit D (444 aa).

Positions 92–424 constitute an Asparaginase/glutaminase domain; the sequence is SEIKIISTGG…EKIQNLMITN (333 aa). Residues Thr102, Thr178, Asp179, and Lys257 contribute to the active site.

It belongs to the asparaginase 1 family. GatD subfamily. In terms of assembly, heterodimer of GatD and GatE.

The enzyme catalyses L-glutamyl-tRNA(Gln) + L-glutamine + ATP + H2O = L-glutaminyl-tRNA(Gln) + L-glutamate + ADP + phosphate + H(+). In terms of biological role, allows the formation of correctly charged Gln-tRNA(Gln) through the transamidation of misacylated Glu-tRNA(Gln) in organisms which lack glutaminyl-tRNA synthetase. The reaction takes place in the presence of glutamine and ATP through an activated gamma-phospho-Glu-tRNA(Gln). The GatDE system is specific for glutamate and does not act on aspartate. The sequence is that of Glutamyl-tRNA(Gln) amidotransferase subunit D from Saccharolobus solfataricus (strain ATCC 35092 / DSM 1617 / JCM 11322 / P2) (Sulfolobus solfataricus).